The primary structure comprises 595 residues: Epsin-2 (595 aa).

6 residues coordinate a 1,2-diacyl-sn-glycero-3-phospho-(1D-myo-inositol-4,5-bisphosphate): arginine 8, lysine 11, arginine 25, asparagine 30, arginine 63, and histidine 73. Residues 12-144 (NIVNNYSEAE…KDEERLKVER (133 aa)) form the ENTH domain. Residues 164–183 (NQITFGRGSSQPNLSTSYSE) are compositionally biased toward polar residues. Disordered stretches follow at residues 164-254 (NQIT…RLRR), 267-289 (SRRD…PGSH), 305-396 (SGPV…KPSS), and 423-469 (TSKK…PESF). Arginine 170 bears the Omega-N-methylarginine mark. Phosphoserine occurs at positions 173, 192, and 195. Polar residues-rich tracts occupy residues 197-216 (HGST…PQTS) and 235-245 (EQSSESVQTAR). 2 consecutive UIM domains span residues 218–237 (EEEL…AEQS) and 255–274 (GDDL…TVKV). The segment covering 306-337 (GPVTQKTEPWSAGASANQTNPWGGTVAPSNIT) has biased composition (polar residues). Tandem repeats lie at residues 313–315 (EPW), 325–327 (NPW), 338–340 (DPW), and 352–354 (DPW). Positions 313–389 (EPWSAGASAN…SNAGKTTDAW (77 aa)) are 6 X 3 AA repeats of [DE]-P-W. Polar residues predominate over residues 358–367 (TTASTQSVPK). Copy 5 of the repeat occupies 370-372 (DPW). Residues 374-384 (ASQQPASNAGK) are compositionally biased toward polar residues. Repeat 6 spans residues 387–389 (DAW). Serine 443 carries the phosphoserine modification. Residues 449 to 460 (SQSLTSASSKPS) show a composition bias toward low complexity. Threonine 465 carries the post-translational modification Phosphothreonine. 2 consecutive repeat copies span residues 494-496 (NPF) and 508-510 (NPF). The interval 494–593 (NPFLAPGAAA…AQSTGTTNPF (100 aa)) is 3 X 3 AA repeats of N-P-F. Serine 526 bears the Phosphoserine mark. The stretch at 591–593 (NPF) is repeat 3.

This sequence belongs to the epsin family. Binds EPS15, AP-2 and clathrin. Interacts with UBQLN2. Interacts with ITSN1. Post-translationally, ubiquitinated.

The protein localises to the cytoplasm. Functionally, plays a role in the formation of clathrin-coated invaginations and endocytosis. The protein is Epsin-2 (Epn2) of Mus musculus (Mouse).